Reading from the N-terminus, the 764-residue chain is Mitogen-activated protein kinase kinase kinase 1b (764 aa).

Disordered stretches follow at residues 1-81 (MVEE…IQQQ), 120-260 (KSIA…TATR), 325-348 (PNLA…SSAM), and 360-392 (VPEL…HYGS). The span at 14–30 (GSWGSGEDGGSSHGGKG) shows a compositional bias: gly residues. Low complexity-rich tracts occupy residues 60–76 (VHST…LSKS) and 125–135 (SQPLSSPSLSQ). Basic and acidic residues predominate over residues 136–145 (EHGEASHSND). Residues 184–201 (YVNSQPQNHYGRKNSPSQ) show a composition bias toward polar residues. Residues 431–684 (WFKGDFIGSG…CDMLLTHPFI (254 aa)) enclose the Protein kinase domain. ATP-binding positions include 437–445 (IGSGTFGSV) and Lys-459. Asp-554 functions as the Proton acceptor in the catalytic mechanism. A disordered region spans residues 706-764 (EERSIDVSESPSIATSSQSGSSPSVAGDAVSPASVAVRPRSMRTLRSEFSMSSPESIAS). Low complexity predominate over residues 715-729 (SPSIATSSQSGSSPS). A compositionally biased stretch (polar residues) spans 752–764 (SEFSMSSPESIAS).

It belongs to the protein kinase superfamily. STE Ser/Thr protein kinase family. MAP kinase kinase kinase subfamily.

The protein resides in the cell membrane. The enzyme catalyses L-seryl-[protein] + ATP = O-phospho-L-seryl-[protein] + ADP + H(+). It catalyses the reaction L-threonyl-[protein] + ATP = O-phospho-L-threonyl-[protein] + ADP + H(+). Functionally, the CERK1, MEKK1a/b, MKK1a/b/c and MPK4a/b proteins are involved in pathogen defense. The pathway induces rapid growth inhibition, cell wall depositions and accumulation of defense-related transcripts. This protein is required for responses to chitin and acts redundantly with MEKK1a. This Physcomitrium patens (Spreading-leaved earth moss) protein is Mitogen-activated protein kinase kinase kinase 1b (MEKK1b).